A 116-amino-acid polypeptide reads, in one-letter code: U11-theraphotoxin-Hhn1b (116 aa).

An N-terminal signal peptide occupies residues 1–21 (MNTVRVTFLLVFVLAVSLGQA). Residues 22 to 74 (DKDENRMEMQEKTEQGKSYLDFAENLLLQKLEELEAKLLEEDSEESRNSRQKR) constitute a propeptide that is removed on maturation. Over residues 60–69 (LEEDSEESRN) the composition is skewed to basic and acidic residues. A disordered region spans residues 60–83 (LEEDSEESRNSRQKRCIGEGVPCD). Intrachain disulfides connect Cys75-Cys90, Cys82-Cys95, and Cys89-Cys110.

The protein belongs to the neurotoxin 14 (magi-1) family. 01 (HNTX-16) subfamily. Expressed by the venom gland.

The protein resides in the secreted. Functionally, probable ion channel inhibitor. The protein is U11-theraphotoxin-Hhn1b of Cyriopagopus hainanus (Chinese bird spider).